The chain runs to 561 residues: Mercuric reductase (561 aa).

The HMA domain maps to 1–65; that stretch reads MTTLKITGMT…AVAGLGYEAT (65 aa). The a metal cation site is built by C11 and C14. Residues A110, G130, and T135 each coordinate FAD. A disulfide bond links C136 and C141. Residues K145, A211, D403, and V411 each contribute to the FAD site. 2 residues coordinate Hg(2+): C558 and C559.

The protein belongs to the class-I pyridine nucleotide-disulfide oxidoreductase family. In terms of assembly, homodimer. FAD serves as cofactor.

The catalysed reaction is Hg + NADP(+) + H(+) = Hg(2+) + NADPH. Functionally, resistance to Hg(2+) in bacteria appears to be governed by a specialized system which includes mercuric reductase. MerA protein is responsible for volatilizing mercury as Hg(0). The polypeptide is Mercuric reductase (merA) (Enterobacter agglomerans (Erwinia herbicola)).